The following is an 82-amino-acid chain: Hydrogenase maturation factor HybG (82 aa).

The protein belongs to the HupF/HypC family.

It functions in the pathway protein modification; [NiFe] hydrogenase maturation. Involved in the maturation of [NiFe] hydrogenases. Involved in the biosynthesis of the Fe(CN)(2)CO cofactor. HybG delivers iron-bound CO(2) to HypD where reduction to CO probably occurs. In complex with HypD, accepts the cyanide ligand generated by HypF and HypE, and also coordinates the carbon monoxide ligand. This is Hydrogenase maturation factor HybG (hybG) from Escherichia coli O157:H7.